The following is a 388-amino-acid chain: Interferon alpha/beta receptor 1b (388 aa).

2 consecutive Fibronectin type-III domains span residues 5–102 (LPQP…FCPD) and 109–211 (PPSR…TEGD). The chain crosses the membrane as a helical span at residues 217-237 (IFLYFLVSMMVCFLLVLLSSY). A disordered region spans residues 308-357 (TAPPSELEQDSGRHIRQDSGDSGIYSTEGGSAQQGRSGGEPIRRDQEVDS). Residues 317 to 326 (DSGRHIRQDS) are compositionally biased toward basic and acidic residues. A compositionally biased stretch (polar residues) spans 331–342 (IYSTEGGSAQQG).

Belongs to the type II cytokine receptor family. In terms of assembly, heterodimer with IFNAR2; forming the receptor for type I interferon.

It localises to the cell membrane. The protein resides in the cytoplasm. The protein localises to the perinuclear region. Functionally, together with IFNAR2, forms the heterodimeric receptor for type I interferons (including interferons alpha, beta, epsilon, omega and kappa). Type I interferon binding activates the JAK-STAT signaling cascade, resulting in transcriptional activation or repression of interferon-regulated genes that encode the effectors of the interferon response. Mechanistically, type I interferon-binding brings the IFNAR1 and IFNAR2 subunits into close proximity with one another, driving their associated Janus kinases (JAKs) (TYK2 bound to IFNAR1 and JAK1 bound to IFNAR2) to cross-phosphorylate one another. The activated kinases phosphorylate specific tyrosine residues on the intracellular domains of IFNAR1 and IFNAR2, forming docking sites for the STAT transcription factors. STAT proteins are then phosphorylated by the JAKs, promoting their translocation into the nucleus to regulate expression of interferon-regulated genes. This Oncorhynchus mykiss (Rainbow trout) protein is Interferon alpha/beta receptor 1b.